Here is a 509-residue protein sequence, read N- to C-terminus: 2,3-bisphosphoglycerate-independent phosphoglycerate mutase (509 aa).

Mn(2+) contacts are provided by Asp12 and Ser62. The Phosphoserine intermediate role is filled by Ser62. Residues His123, Arg153–Asp154, Arg185, Arg191, Arg260–Arg263, and Lys333 each bind substrate. Residues Asp400, His404, Asp441, His442, and His460 each contribute to the Mn(2+) site.

The protein belongs to the BPG-independent phosphoglycerate mutase family. As to quaternary structure, monomer. Mn(2+) is required as a cofactor.

The catalysed reaction is (2R)-2-phosphoglycerate = (2R)-3-phosphoglycerate. It participates in carbohydrate degradation; glycolysis; pyruvate from D-glyceraldehyde 3-phosphate: step 3/5. Functionally, catalyzes the interconversion of 2-phosphoglycerate and 3-phosphoglycerate. In Clostridium botulinum (strain ATCC 19397 / Type A), this protein is 2,3-bisphosphoglycerate-independent phosphoglycerate mutase.